A 377-amino-acid polypeptide reads, in one-letter code: Malate dehydrogenase, cytoplasmic (377 aa).

Residues 2–5 carry the Pro/N-degron motif; the sequence is PHSV. Position 6 is a phosphothreonine (threonine 6). Residues 20–26 and aspartate 57 contribute to the NAD(+) site; that span reads GAAGGIG. Residues arginine 106 and arginine 112 each contribute to the substrate site. NAD(+) contacts are provided by residues asparagine 119 and 144 to 146; that span reads ISN. Residues asparagine 146 and arginine 185 each coordinate substrate. The Proton acceptor role is filled by histidine 215. Residue methionine 266 participates in NAD(+) binding.

Belongs to the LDH/MDH superfamily. MDH type 1 family. In terms of assembly, homodimer. Targeted for proteasomal degradation when cells are shifted to glucose-containing growth medium.

Its subcellular location is the cytoplasm. It catalyses the reaction (S)-malate + NAD(+) = oxaloacetate + NADH + H(+). The isoenzyme MDH2 may function primarily in the glyoxylate cycle. The protein is Malate dehydrogenase, cytoplasmic (MDH2) of Saccharomyces cerevisiae (strain ATCC 204508 / S288c) (Baker's yeast).